We begin with the raw amino-acid sequence, 97 residues long: Putative pterin-4-alpha-carbinolamine dehydratase (97 aa).

This sequence belongs to the pterin-4-alpha-carbinolamine dehydratase family.

It carries out the reaction (4aS,6R)-4a-hydroxy-L-erythro-5,6,7,8-tetrahydrobiopterin = (6R)-L-erythro-6,7-dihydrobiopterin + H2O. The chain is Putative pterin-4-alpha-carbinolamine dehydratase from Opitutus terrae (strain DSM 11246 / JCM 15787 / PB90-1).